The sequence spans 499 residues: Phenylalanine--tRNA ligase alpha subunit B (499 aa).

Residues T330, 373-375 (QIE), and Y413 each bind L-phenylalanine. E415 is a Mg(2+) binding site. An L-phenylalanine-binding site is contributed by F439.

Belongs to the class-II aminoacyl-tRNA synthetase family. Phe-tRNA synthetase alpha subunit type 2 subfamily. Heterotetramer; dimer of two heterodimers formed by alpha and beta subunits. The cofactor is Mg(2+).

It localises to the cytoplasm. The enzyme catalyses tRNA(Phe) + L-phenylalanine + ATP = L-phenylalanyl-tRNA(Phe) + AMP + diphosphate + H(+). This Xenopus laevis (African clawed frog) protein is Phenylalanine--tRNA ligase alpha subunit B (farsa-b).